Consider the following 144-residue polypeptide: Large ribosomal subunit protein uL15 (144 aa).

Residues 1-57 form a disordered region; the sequence is MELNNLKPAEGAKHAKRRVGRGIGSGLGKTAGRGHKGQKSRSGGFHKVGFEGGQMPL. Over residues 21–31 the composition is skewed to gly residues; the sequence is RGIGSGLGKTA.

This sequence belongs to the universal ribosomal protein uL15 family. In terms of assembly, part of the 50S ribosomal subunit.

Binds to the 23S rRNA. This Paraburkholderia xenovorans (strain LB400) protein is Large ribosomal subunit protein uL15.